The following is a 774-amino-acid chain: Lysyl oxidase homolog 2 (774 aa).

A signal peptide spans 1 to 25 (MERPLCSHLCSCLAMLALLSPLSLA). 4 consecutive SRCR domains span residues 58–159 (LRLA…VVCS), 188–302 (IRAI…VSCV), 326–425 (VRLR…VRCN), and 435–544 (LRLN…VACS). Cystine bridges form between Cys-84–Cys-148, Cys-97–Cys-158, Cys-128–Cys-138, Cys-218–Cys-291, Cys-231–Cys-301, Cys-265–Cys-275, Cys-351–Cys-414, Cys-364–Cys-424, and Cys-395–Cys-405. A glycan (N-linked (GlcNAc...) asparagine) is linked at Asn-288. Asn-455 carries N-linked (GlcNAc...) (complex) asparagine glycosylation. Cystine bridges form between Cys-464-Cys-530, Cys-477-Cys-543, and Cys-511-Cys-521. The segment at 548 to 751 (PDLVLNAEMV…WMYNCHIGGS (204 aa)) is lysyl-oxidase like. Asp-549 and Leu-550 together coordinate Ca(2+). Disulfide bonds link Cys-573-Cys-625, Cys-579-Cys-695, Cys-657-Cys-673, and Cys-663-Cys-685. Cu cation-binding residues include His-626, His-628, and His-630. Asn-644 carries N-linked (GlcNAc...) (complex) asparagine glycosylation. Positions 653–689 (KASFCLEDTECEGDIQKNYECANFGDQGITMGCWDMY) form a cross-link, lysine tyrosylquinone (Lys-Tyr). Tyr-689 carries the 2',4',5'-topaquinone modification. Ca(2+) is bound by residues Glu-722, Asp-724, Asn-727, and Asn-728. A disulfide bond links Cys-732 and Cys-746.

Belongs to the lysyl oxidase family. As to quaternary structure, component of some chromatin repressor complex. Interacts with SNAI1. Interacts with TAF10. Interacts with HSPA5. Interacts with EFEMP2. It depends on Cu cation as a cofactor. Lysine tyrosylquinone residue is required as a cofactor. The lysine tyrosylquinone cross-link (LTQ) is generated by condensation of the epsilon-amino group of a lysine with a topaquinone produced by oxidation of tyrosine. Post-translationally, N-glycosylated. N-glycosylation on Asn-455 and Asn-644 may be essential for proper folding and secretion; may be composed of a fucosylated carbohydrates attached to a trimannose N-linked glycan core. As to expression, expressed in many tissues. Highest expression in reproductive tissues, placenta, uterus and prostate. In esophageal epithelium, expressed in the basal, prickle and granular cell layers. Up-regulated in a number of cancers cells and tissues.

It localises to the secreted. The protein resides in the extracellular space. The protein localises to the extracellular matrix. Its subcellular location is the basement membrane. It is found in the nucleus. It localises to the chromosome. The protein resides in the endoplasmic reticulum. It catalyses the reaction L-lysyl-[protein] + O2 + H2O = (S)-2-amino-6-oxohexanoyl-[protein] + H2O2 + NH4(+). According to some reports, it is inhibited by beta-aminopropionitrile (BAPN). According to another report, it is not inhibited by beta-aminopropionitrile (BAPN). Specifically inhibited by a mouse monoclonal antibody AB0023, inhibition occurs in a non-competitive manner. Its function is as follows. Mediates the post-translational oxidative deamination of lysine residues on target proteins leading to the formation of deaminated lysine (allysine). Acts as a transcription corepressor and specifically mediates deamination of trimethylated 'Lys-4' of histone H3 (H3K4me3), a specific tag for epigenetic transcriptional activation. Shows no activity against histone H3 when it is trimethylated on 'Lys-9' (H3K9me3) or 'Lys-27' (H3K27me3) or when 'Lys-4' is monomethylated (H3K4me1) or dimethylated (H3K4me2). Also mediates deamination of methylated TAF10, a member of the transcription factor IID (TFIID) complex, which induces release of TAF10 from promoters, leading to inhibition of TFIID-dependent transcription. LOXL2-mediated deamination of TAF10 results in transcriptional repression of genes required for embryonic stem cell pluripotency including POU5F1/OCT4, NANOG, KLF4 and SOX2. Involved in epithelial to mesenchymal transition (EMT) via interaction with SNAI1 and participates in repression of E-cadherin CDH1, probably by mediating deamination of histone H3. During EMT, involved with SNAI1 in negatively regulating pericentromeric heterochromatin transcription. SNAI1 recruits LOXL2 to pericentromeric regions to oxidize histone H3 and repress transcription which leads to release of heterochromatin component CBX5/HP1A, enabling chromatin reorganization and acquisition of mesenchymal traits. Interacts with the endoplasmic reticulum protein HSPA5 which activates the IRE1-XBP1 pathway of the unfolded protein response, leading to expression of several transcription factors involved in EMT and subsequent EMT induction. Involved in E-cadherin repression following hypoxia, a hallmark of EMT believed to amplify tumor aggressiveness, suggesting that it may play a role in tumor progression. When secreted into the extracellular matrix, promotes cross-linking of extracellular matrix proteins by mediating oxidative deamination of peptidyl lysine residues in precursors to fibrous collagen and elastin. Acts as a regulator of sprouting angiogenesis, probably via collagen IV scaffolding. Acts as a regulator of chondrocyte differentiation, probably by regulating expression of factors that control chondrocyte differentiation. This is Lysyl oxidase homolog 2 (LOXL2) from Homo sapiens (Human).